Here is a 541-residue protein sequence, read N- to C-terminus: T-complex protein 1 subunit epsilon (541 aa).

N-acetylalanine is present on alanine 2. Residue lysine 20 forms a Glycyl lysine isopeptide (Lys-Gly) (interchain with G-Cter in SUMO2) linkage. Serine 26 is subject to Phosphoserine. Glycine 53 lines the ADP pocket. Glycine 53 contributes to the ATP binding site. Aspartate 104 contributes to the Mg(2+) binding site. ADP is bound by residues glycine 105, threonine 106, threonine 107, and serine 175. Residues threonine 106 and threonine 107 each coordinate ATP. Glycyl lysine isopeptide (Lys-Gly) (interchain with G-Cter in SUMO2) cross-links involve residues lysine 210, lysine 214, lysine 265, lysine 275, and lysine 279. Serine 346 bears the Phosphoserine mark. Residue lysine 392 forms a Glycyl lysine isopeptide (Lys-Gly) (interchain with G-Cter in SUMO2) linkage. ADP is bound by residues glycine 422, aspartate 492, glutamate 508, and lysine 513. Residue glycine 422 participates in ATP binding. Phosphoserine is present on serine 539.

This sequence belongs to the TCP-1 chaperonin family. Component of the chaperonin-containing T-complex (TRiC), a hexadecamer composed of two identical back-to-back stacked rings enclosing a protein folding chamber. Each ring is made up of eight different subunits: TCP1/CCT1, CCT2, CCT3, CCT4, CCT5, CCT6A/CCT6, CCT7, CCT8. Interacts with PACRG. Interacts with DNAAF4. Interacts with DLEC1. Interacts with SPMAP2. Ubiquitinated by the DCX(DCAF12) complex specifically recognizes the diglutamate (Glu-Glu) at the C-terminus, leading to its degradation.

Its subcellular location is the cytoplasm. It localises to the cytoskeleton. The protein resides in the microtubule organizing center. The protein localises to the centrosome. The enzyme catalyses ATP + H2O = ADP + phosphate + H(+). Component of the chaperonin-containing T-complex (TRiC), a molecular chaperone complex that assists the folding of actin, tubulin and other proteins upon ATP hydrolysis. The TRiC complex mediates the folding of WRAP53/TCAB1, thereby regulating telomere maintenance. As part of the TRiC complex may play a role in the assembly of BBSome, a complex involved in ciliogenesis regulating transports vesicles to the cilia. The polypeptide is T-complex protein 1 subunit epsilon (Cct5) (Rattus norvegicus (Rat)).